Consider the following 211-residue polypeptide: MAKLKVNPTRMALSELKKRLVTARRGHKLLKDKQDELMRQFINLIKENKKLRVEVEKELSDSFKSFLLASATMSPLFLESAISFPKEKIAVEMKLKNIMSVNVPEMKFVKEEMEGSIFPYGFVQTSAELDDTVIKLQKVLDNLLSLAEIEKSCQLMADEIEKTRRRVNALEYSTIPNLEETVKDIRMKLDENERATITRLMKVKQMLQKDA.

It belongs to the V-ATPase D subunit family.

Produces ATP from ADP in the presence of a proton gradient across the membrane. The polypeptide is V-type ATP synthase subunit D (Fusobacterium nucleatum subsp. nucleatum (strain ATCC 25586 / DSM 15643 / BCRC 10681 / CIP 101130 / JCM 8532 / KCTC 2640 / LMG 13131 / VPI 4355)).